Reading from the N-terminus, the 344-residue chain is Palmitoyltransferase ZDHHC4 (344 aa).

Residues 1–2 (MD) are Lumenal-facing. Residues 3–23 (FLVLFLFYLASVLMGLVLICV) traverse the membrane as a helical segment. Residues 24-67 (CSKTHSLKGLARGGAQIFSCIIPECLQRAVHGLLHYLFHTRNHT) lie on the Cytoplasmic side of the membrane. The helical transmembrane segment at 68–88 (FIVLHLVLQGMVYTEYTWEVF) threads the bilayer. Topologically, residues 89–99 (GYCQELELSLH) are lumenal. Residues 100–120 (YLLLPYLLLGVNLFFFTLTCG) traverse the membrane as a helical segment. At 121–192 (TNPGIITKAN…NNCIGAWNIR (72 aa)) the chain is on the cytoplasmic side. The DHHC domain occupies 149 to 199 (VRCSTCDLRKPARSKHCSVCNWCVHRFDHHCVWVNNCIGAWNIRYFLIYVL). Cysteine 179 serves as the catalytic S-palmitoyl cysteine intermediate. Residues 193 to 213 (YFLIYVLTLTASAATVAIVST) traverse the membrane as a helical segment. Residues 214–255 (TFLVHLVVMSDLYQETYIDDLGHLHVMDTVFLIQYLFLTFPR) lie on the Lumenal side of the membrane. Residues 256 to 276 (IVFMLGFVVVLSFLLGGYLLF) form a helical membrane-spanning segment. Over 277–344 (VLYLAATNQT…FPCHERKKQE (68 aa)) the chain is Cytoplasmic. Positions 341-344 (KKQE) match the Di-lysine motif motif.

This sequence belongs to the DHHC palmitoyltransferase family. Interacts with CPT1A.

It localises to the endoplasmic reticulum membrane. The protein localises to the golgi apparatus membrane. It is found in the cell membrane. The enzyme catalyses L-cysteinyl-[protein] + hexadecanoyl-CoA = S-hexadecanoyl-L-cysteinyl-[protein] + CoA. Palmitoyltransferase that catalyzes the addition of palmitate onto protein substrates including the D(2) dopamine receptor DRD2, GSK3B or MAVS. Mediates GSK3B palmitoylation to prevent its AKT1-mediated phosphorylation leading to activation of the STAT3 signaling pathway. Also catalyzes MAVS palmitoylation which promotes its stabilization and activation by inhibiting 'Lys-48'- but facilitating 'Lys-63'-linked ubiquitination. The sequence is that of Palmitoyltransferase ZDHHC4 from Homo sapiens (Human).